A 716-amino-acid polypeptide reads, in one-letter code: Leucine-rich repeat neuronal protein 1 (716 aa).

The signal sequence occupies residues 1 to 25 (MARMSFVLAAYQMVLSLLMTSLTGS). In terms of domain architecture, LRRNT spans 26–72 (SLQSSECPQLCVCEIRPWFTPQSTYREATTVDCNDLRLTRIPSNLSS). Over 26 to 631 (SLQSSECPQL…DISDQETSTA (606 aa)) the chain is Extracellular. Asn69 carries an N-linked (GlcNAc...) asparagine glycan. LRR repeat units follow at residues 73 to 95 (DTQVLLLQSNNIAKTVDELQQLF), 96 to 117 (NLTELDFSQNNFTNIKEVGLAN), 120 to 141 (QLTTLHLEENQITEMNDYCLQD), 144 to 165 (NLQELYINHNQISTISANAFSG), 168 to 189 (NLLRLHLNSNKLKVIDSRWFDS), 192 to 213 (NLEILMIGENPVIGILDMNFKP), 216 to 237 (NLRSLVLAGMYLTDIPGNALVG), 240 to 261 (SLESLSFYDNKLVKVPQLALQK), and 264 to 285 (NLKFLDLNKNPIHKIQEGDFKN). N-linked (GlcNAc...) asparagine glycans are attached at residues Asn96, Asn106, and Asn117. The LRRCT domain maps to 371–424 (NPLRCDCVIHWINSNKTNIRFMEPLSMFCAMPPEYRGQQVKEVLIQDSSEQCLP). An N-linked (GlcNAc...) asparagine glycan is attached at Asn385. One can recognise an Ig-like C2-type domain in the interval 424-515 (PMISHDTFPN…GADTRVVMIK (92 aa)). A disulfide bond links Cys447 and Cys499. 3 N-linked (GlcNAc...) asparagine glycosylation sites follow: Asn517, Asn582, and Asn611. The region spanning 525-617 (QVLKIYVKQT…SCVNVTTKNA (93 aa)) is the Fibronectin type-III domain. Residues 632–652 (LAAVMGSMFAVISLASIAVYI) traverse the membrane as a helical segment. The Cytoplasmic segment spans residues 653–716 (AKRFKRKNYH…VDTSRSYYMW (64 aa)). Positions 691–700 (DSEKDKDGTA) are enriched in basic and acidic residues. Residues 691 to 716 (DSEKDKDGTADTKPTQVDTSRSYYMW) form a disordered region. Polar residues predominate over residues 702–716 (TKPTQVDTSRSYYMW).

It localises to the membrane. The polypeptide is Leucine-rich repeat neuronal protein 1 (LRRN1) (Bos taurus (Bovine)).